Here is a 161-residue protein sequence, read N- to C-terminus: Epithelial membrane protein 2 (161 aa).

4 helical membrane-spanning segments follow: residues 1 to 21 (MLVI…LLFI), 67 to 87 (TMIL…LQLF), 95 to 115 (FVFT…GASI), and 137 to 157 (FVVA…YLVL).

It belongs to the PMP-22/EMP/MP20 family. Expressed in the arches, orbits, pectoral fins, vessels, pronephric renal tubules, and glomeruli.

It is found in the golgi apparatus membrane. The protein resides in the cell membrane. It localises to the apical cell membrane. Its subcellular location is the membrane raft. The protein localises to the cytoplasm. It is found in the nucleus. The protein resides in the perinuclear region. In terms of biological role, functions as a key regulator of cell membrane composition by regulating protein surface expression. Also, plays a role in regulation of processes including cell migration, cell proliferation, cell contraction and cell adhesion. May play a role in glomerular filtration. The polypeptide is Epithelial membrane protein 2 (emp2) (Danio rerio (Zebrafish)).